We begin with the raw amino-acid sequence, 462 residues long: L-seryl-tRNA(Sec) selenium transferase (462 aa).

K292 carries the N6-(pyridoxal phosphate)lysine modification.

The protein belongs to the SelA family. Requires pyridoxal 5'-phosphate as cofactor.

Its subcellular location is the cytoplasm. It carries out the reaction L-seryl-tRNA(Sec) + selenophosphate + H(+) = L-selenocysteinyl-tRNA(Sec) + phosphate. It functions in the pathway aminoacyl-tRNA biosynthesis; selenocysteinyl-tRNA(Sec) biosynthesis; selenocysteinyl-tRNA(Sec) from L-seryl-tRNA(Sec) (bacterial route): step 1/1. Converts seryl-tRNA(Sec) to selenocysteinyl-tRNA(Sec) required for selenoprotein biosynthesis. The sequence is that of L-seryl-tRNA(Sec) selenium transferase from Geobacter metallireducens (strain ATCC 53774 / DSM 7210 / GS-15).